Consider the following 271-residue polypeptide: Short-chain dehydrogenase PC-15 (271 aa).

Positions 8, 34, 40, 56, 84, 148, 152, 181, and 183 each coordinate NADP(+). Tyr148 serves as the catalytic Proton acceptor. Lys152 (lowers pKa of active site Tyr) is an active-site residue.

Belongs to the short-chain dehydrogenases/reductases (SDR) family.

It functions in the pathway secondary metabolite biosynthesis. Functionally, short-chain dehydrogenase; part of the gene cluster that mediates the biosynthesis of the indole diterpenes penitrems. The geranylgeranyl diphosphate (GGPP) synthase penG catalyzes the first step in penitrem biosynthesis via conversion of farnesyl pyrophosphate and isopentyl pyrophosphate into geranylgeranyl pyrophosphate (GGPP). Condensation of indole-3-glycerol phosphate with GGPP by the prenyl transferase penC then forms 3-geranylgeranylindole (3-GGI). Epoxidation by the FAD-dependent monooxygenase penM leads to a epoxidized-GGI that is substrate of the terpene cyclase penB for cyclization to yield paspaline. Paspaline is subsequently converted to 13-desoxypaxilline by the cytochrome P450 monooxygenase penP, the latter being then converted to paxilline by the cytochrome P450 monooxygenase penQ. Paxilline is converted to beta-paxitriol via C-10 ketoreduction by the short-chain dehydrogenase PC-15 which can be monoprenylated at the C-20 by the indole diterpene prenyltransferase penD. A two-step elimination (acetylation and elimination) process performed by the O-acetyltransferase PC-16 and the P.simplicissimum ptmI-ortholog not yet identified in P.crustosum, leads to the production of the prenylated form of penijanthine. The FAD-linked oxidoreductase ptmO then converts the prenylated form of penijanthine into PC-M5 which is in turn transformed into PC-M4 by the aromatic dimethylallyltransferase PC-22. A series of oxidation steps involving 4 cytochrome P450 monooxygenases (PC-21, PC-05, PC-23, PC-20) and a FAD-dependent monooxygenase (PC-14) are required for the transformation of PC-M4 to penitrems A and E. Synthesis of these final products is proposed to proceed via penitrems D and C (PC-21, PC-05, PC-14) and penitrems B and F (PC-21, PC-05, PC-14, PC-23). This Penicillium crustosum (Blue mold fungus) protein is Short-chain dehydrogenase PC-15.